Here is a 242-residue protein sequence, read N- to C-terminus: Probable transcriptional regulatory protein LSL_0422 (242 aa).

The segment at 1–21 (MSGHSKWHNIQGRKNAQDAKR) is disordered.

The protein belongs to the TACO1 family.

The protein resides in the cytoplasm. This is Probable transcriptional regulatory protein LSL_0422 from Ligilactobacillus salivarius (strain UCC118) (Lactobacillus salivarius).